A 143-amino-acid polypeptide reads, in one-letter code: Large ribosomal subunit protein uL16c (143 aa).

This sequence belongs to the universal ribosomal protein uL16 family. As to quaternary structure, part of the 50S ribosomal subunit.

Its subcellular location is the plastid. It is found in the chloroplast. The sequence is that of Large ribosomal subunit protein uL16c from Marchantia polymorpha (Common liverwort).